Consider the following 302-residue polypeptide: (2S)-3-sulfopropanediol sulfolyase activating enzyme (302 aa).

The Radical SAM core domain occupies 19-301 (HDGEGIRTLV…RLNIMLKSYE (283 aa)). C33, C37, C40, C59, C65, C68, C72, C91, C94, C97, and C101 together coordinate [4Fe-4S] cluster. An S-adenosyl-L-methionine-binding site is contributed by 39 to 41 (WCS). 4Fe-4S ferredoxin-type domains follow at residues 50-81 (PERA…SIVG) and 82-111 (GLVC…VYGE). Residues G141 and 190–192 (DIK) each bind S-adenosyl-L-methionine.

This sequence belongs to the organic radical-activating enzymes family. [4Fe-4S] cluster serves as cofactor.

The enzyme catalyses glycyl-[protein] + reduced [flavodoxin] + S-adenosyl-L-methionine = glycin-2-yl radical-[protein] + semiquinone [flavodoxin] + 5'-deoxyadenosine + L-methionine + H(+). It functions in the pathway organosulfur degradation; alkanesulfonate degradation. Its function is as follows. Involved in the degradation of the organosulfur compound 2(S)-dihydroxypropanesulfonate (DHPS). Catalyzes activation of the (2S)-3-sulfopropanediol sulfolyase HpsG under anaerobic conditions by generation of an organic free radical on a glycine residue. The sequence is that of (2S)-3-sulfopropanediol sulfolyase activating enzyme from Bilophila wadsworthia (strain 3_1_6).